The following is a 216-amino-acid chain: RNA pyrophosphohydrolase (216 aa).

The region spanning 6 to 149 (GFRPNVGIIL…KRDVYQLALT (144 aa)) is the Nudix hydrolase domain. Residues 38–59 (GGIKYGETPMQAMYRELHEETG) carry the Nudix box motif.

This sequence belongs to the Nudix hydrolase family. RppH subfamily. The cofactor is a divalent metal cation.

In terms of biological role, accelerates the degradation of transcripts by removing pyrophosphate from the 5'-end of triphosphorylated RNA, leading to a more labile monophosphorylated state that can stimulate subsequent ribonuclease cleavage. The sequence is that of RNA pyrophosphohydrolase from Burkholderia ambifaria (strain MC40-6).